The following is a 230-amino-acid chain: Small ribosomal subunit protein uS3 (230 aa).

Residues 39–107 (VRKFLEKKLE…PAQINIAEIR (69 aa)) form the KH type-2 domain.

The protein belongs to the universal ribosomal protein uS3 family. As to quaternary structure, part of the 30S ribosomal subunit. Forms a tight complex with proteins S10 and S14.

Binds the lower part of the 30S subunit head. Binds mRNA in the 70S ribosome, positioning it for translation. This Shewanella amazonensis (strain ATCC BAA-1098 / SB2B) protein is Small ribosomal subunit protein uS3.